The following is a 1345-amino-acid chain: DNA-directed RNA polymerase subunit beta' (1345 aa).

Zn(2+) contacts are provided by Cys60, Cys62, Cys75, and Cys78. Residues Asp536, Asp538, and Asp540 each coordinate Mg(2+). Zn(2+)-binding residues include Cys895, Cys974, Cys981, and Cys984. The interval 1325–1345 is disordered; the sequence is DDNDNPVDFGDEFRIDPDELK. The segment covering 1335 to 1345 has biased composition (basic and acidic residues); sequence DEFRIDPDELK.

This sequence belongs to the RNA polymerase beta' chain family. In terms of assembly, the RNAP catalytic core consists of 2 alpha, 1 beta, 1 beta' and 1 omega subunit. When a sigma factor is associated with the core the holoenzyme is formed, which can initiate transcription. Mg(2+) serves as cofactor. Requires Zn(2+) as cofactor.

The catalysed reaction is RNA(n) + a ribonucleoside 5'-triphosphate = RNA(n+1) + diphosphate. Its function is as follows. DNA-dependent RNA polymerase catalyzes the transcription of DNA into RNA using the four ribonucleoside triphosphates as substrates. The sequence is that of DNA-directed RNA polymerase subunit beta' from Bifidobacterium animalis subsp. lactis (strain AD011).